Reading from the N-terminus, the 464-residue chain is Argininosuccinate lyase (464 aa).

The protein belongs to the lyase 1 family. Argininosuccinate lyase subfamily.

The protein resides in the cytoplasm. The catalysed reaction is 2-(N(omega)-L-arginino)succinate = fumarate + L-arginine. It functions in the pathway amino-acid biosynthesis; L-arginine biosynthesis; L-arginine from L-ornithine and carbamoyl phosphate: step 3/3. The chain is Argininosuccinate lyase from Janthinobacterium sp. (strain Marseille) (Minibacterium massiliensis).